Reading from the N-terminus, the 211-residue chain is Acyl-homoserine-lactone synthase (211 aa).

This sequence belongs to the autoinducer synthase family.

It catalyses the reaction a fatty acyl-[ACP] + S-adenosyl-L-methionine = an N-acyl-L-homoserine lactone + S-methyl-5'-thioadenosine + holo-[ACP] + H(+). Its function is as follows. Required for the synthesis of OHHL (N-(3-oxohexanoyl)-L-homoserine lactone), an autoinducer molecule which binds to TraR and thus acts in the control of conjugal transfer. This Agrobacterium fabrum (strain C58 / ATCC 33970) (Agrobacterium tumefaciens (strain C58)) protein is Acyl-homoserine-lactone synthase (traI).